Reading from the N-terminus, the 231-residue chain is Ribose-5-phosphate isomerase A (231 aa).

Substrate contacts are provided by residues 23-26 (SGST), 80-83 (DGAD), and 93-96 (KGGG). Residue glutamate 102 is the Proton acceptor of the active site. Lysine 120 lines the substrate pocket.

Belongs to the ribose 5-phosphate isomerase family. Homodimer.

It carries out the reaction aldehydo-D-ribose 5-phosphate = D-ribulose 5-phosphate. Its pathway is carbohydrate degradation; pentose phosphate pathway; D-ribose 5-phosphate from D-ribulose 5-phosphate (non-oxidative stage): step 1/1. Functionally, catalyzes the reversible conversion of ribose-5-phosphate to ribulose 5-phosphate. The polypeptide is Ribose-5-phosphate isomerase A (Prochlorococcus marinus subsp. pastoris (strain CCMP1986 / NIES-2087 / MED4)).